We begin with the raw amino-acid sequence, 232 residues long: Ornithine carbamoyltransferase (232 aa).

Residues Gln15, Arg39, and 66 to 69 (HPTQ) contribute to the carbamoyl phosphate site. L-ornithine is bound by residues Asn99, Asp163, and 167 to 168 (SM). Carbamoyl phosphate is bound by residues 204–207 (HCLP) and Thr232.

Belongs to the aspartate/ornithine carbamoyltransferase superfamily. OTCase family.

The protein localises to the cytoplasm. It catalyses the reaction carbamoyl phosphate + L-ornithine = L-citrulline + phosphate + H(+). It functions in the pathway amino-acid biosynthesis; L-arginine biosynthesis; L-arginine from L-ornithine and carbamoyl phosphate: step 1/3. Functionally, reversibly catalyzes the transfer of the carbamoyl group from carbamoyl phosphate (CP) to the N(epsilon) atom of ornithine (ORN) to produce L-citrulline. In Neisseria perflava, this protein is Ornithine carbamoyltransferase (argF).